A 182-amino-acid polypeptide reads, in one-letter code: MWTLQQPDLYAYAVHDGAKRTKIAAFDLDGTLISSKTRSKFPKNPDDWQLLPCAHKLKRLYELGYDLVVFTNQAHLGSGKIKASDLLYKLENIKKATGVPISFYVSPNKDEHRKPDTGMWREMAKQFTHIDKEQSFYVGDAAGRINLTTGQKDFSDSDRVFAKNLSLQFYTPEQFIQLDLDL.

Belongs to the DNA 3' phosphatase family.

This is an uncharacterized protein from Autographa californica nuclear polyhedrosis virus (AcMNPV).